Reading from the N-terminus, the 160-residue chain is Type IV major fimbrial protein FimA (160 aa).

Positions 1 to 7 (MKSLQKG) are cleaved as a propeptide — leader sequence. Residue Phe-8 is modified to N-methylphenylalanine. A helical transmembrane segment spans residues 8–28 (FTLIELMIVVAIIGILAAFAI). A disulfide bridge links Cys-63 with Cys-106.

This sequence belongs to the N-Me-Phe pilin family. The pili are polar flexible filaments of about 5.4 nanometers diameter and 2.5 micrometers average length; they consist of only a single polypeptide chain arranged in a helical configuration of five subunits per turn in the assembled pilus.

Its subcellular location is the fimbrium. The protein resides in the membrane. Functionally, major component of the type IV fimbriae that plays an essential role in twitching motility, natural transformation, and protease secretion. The chain is Type IV major fimbrial protein FimA (fimA) from Dichelobacter nodosus (Bacteroides nodosus).